Here is a 535-residue protein sequence, read N- to C-terminus: WD repeat-containing protein 25 (535 aa).

Disordered regions lie at residues 1 to 108 and 141 to 160; these read MASL…PRPS and DQST…RKRG. Polar residues predominate over residues 141 to 155; sequence DQSTFESTAGNASSS. 7 WD repeats span residues 235–277, 281–320, 321–362, 365–411, 415–454, 460–501, and 504–535; these read GHRG…HCLQ, VHSE…QVFS, GQSD…VVKG, ATIQ…KISN, HERY…RMSR, GHKV…RACT, and GHTQ…KIWH.

The protein is WD repeat-containing protein 25 (Wdr25) of Mus musculus (Mouse).